The primary structure comprises 167 residues: Respiratory supercomplex factor 1-A, mitochondrial (167 aa).

Positions 1 to 86 (MCSDFEEETS…TERKQRREFE (86 aa)) constitute an HIG1 domain. The next 2 helical transmembrane spans lie at 21–38 (EPLI…LYRA) and 53–75 (MFRA…GMYY). Residues 75–107 (YKTERKQRREFEKKVEERKAQEKRDAWLRELEA) are a coiled coil.

The protein belongs to the RCF1 family. Associates with the respiratory chain complex III/complex IV supercomplex.

It is found in the mitochondrion membrane. In terms of biological role, cytochrome c oxidase subunit which plays a role in assembly of respiratory supercomplexes. This chain is Respiratory supercomplex factor 1-A, mitochondrial (rcf1-A), found in Talaromyces marneffei (strain ATCC 18224 / CBS 334.59 / QM 7333) (Penicillium marneffei).